A 773-amino-acid polypeptide reads, in one-letter code: Probable dipeptidyl peptidase 4 (773 aa).

The signal sequence occupies residues 1-18 (MKLSVLSVLLVSVAQAAA). 6 N-linked (GlcNAc...) asparagine glycosylation sites follow: Asn-37, Asn-80, Asn-112, Asn-220, Asn-471, and Asn-496. Ser-619 (charge relay system) is an active-site residue. Asn-671 carries N-linked (GlcNAc...) asparagine glycosylation. Active-site charge relay system residues include Asp-696 and His-731.

It belongs to the peptidase S9B family.

Its subcellular location is the secreted. It carries out the reaction Release of an N-terminal dipeptide, Xaa-Yaa-|-Zaa-, from a polypeptide, preferentially when Yaa is Pro, provided Zaa is neither Pro nor hydroxyproline.. Functionally, extracellular dipeptidyl-peptidase which removes N-terminal dipeptides sequentially from polypeptides having unsubstituted N-termini provided that the penultimate residue is proline. The sequence is that of Probable dipeptidyl peptidase 4 (dpp4) from Emericella nidulans (strain FGSC A4 / ATCC 38163 / CBS 112.46 / NRRL 194 / M139) (Aspergillus nidulans).